The primary structure comprises 2151 residues: Protein PRR14L (2151 aa).

2 stretches are compositionally biased toward basic and acidic residues: residues 112-123 (KRSESMEPKVFR) and 134-154 (EPSE…EEKT). Disordered regions lie at residues 112-160 (KRSE…SQED), 206-225 (GTKT…KDLS), and 314-350 (QLHG…SDLS). Serine 157 carries the post-translational modification Phosphoserine. The span at 322 to 350 (QPSSTHDSPTATSPLKENSEVSCFTSDLS) shows a compositional bias: polar residues. 2 positions are modified to phosphoserine: serine 582 and serine 945. The interval 974–1017 (SNQNRPDECKSEGQSAKEMLSSDQRETVTEPHGEVNHNQKDLLV) is disordered. The segment covering 996–1013 (DQRETVTEPHGEVNHNQK) has biased composition (basic and acidic residues). Phosphoserine is present on serine 1029. The segment covering 1091-1103 (DSRSTLSRRELDA) has biased composition (basic and acidic residues). Disordered regions lie at residues 1091-1115 (DSRS…DSDF), 1178-1226 (DSHY…SCHD), 1782-1802 (TGVH…PLQD), and 1986-2012 (AACP…KVSQ). The segment covering 1178-1187 (DSHYGQQDKG) has biased composition (polar residues). The segment covering 1188 to 1201 (TSLRETQEMTEGSR) has biased composition (basic and acidic residues).

This Homo sapiens (Human) protein is Protein PRR14L (PRR14L).